We begin with the raw amino-acid sequence, 421 residues long: Phosphoribosylamine--glycine ligase (421 aa).

One can recognise an ATP-grasp domain in the interval 108-314; sequence KEIMVKYNVP…FAQNIDDIMM (207 aa). Position 134–195 (134–195) interacts with ATP; that stretch reads IEEQGAPIVV…EEFLDGEEFS (62 aa). Glu284 and Asn286 together coordinate Mg(2+).

Belongs to the GARS family. Mg(2+) serves as cofactor. Mn(2+) is required as a cofactor.

It carries out the reaction 5-phospho-beta-D-ribosylamine + glycine + ATP = N(1)-(5-phospho-beta-D-ribosyl)glycinamide + ADP + phosphate + H(+). The protein operates within purine metabolism; IMP biosynthesis via de novo pathway; N(1)-(5-phospho-D-ribosyl)glycinamide from 5-phospho-alpha-D-ribose 1-diphosphate: step 2/2. The polypeptide is Phosphoribosylamine--glycine ligase (Streptococcus pyogenes serotype M6 (strain ATCC BAA-946 / MGAS10394)).